Consider the following 287-residue polypeptide: 4-hydroxybenzoate octaprenyltransferase (287 aa).

The next 9 membrane-spanning stretches (helical) occupy residues 21–41 (VGIF…AKGA), 44–64 (FKIA…GCIV), 91–111 (VTEA…LVLL), 112–132 (LNRL…VYPF), 139–159 (LPQL…FAAT), 160–180 (VGHV…WPIV), 211–231 (LMIG…GWYL), 235–255 (YWFY…QFLI), and 263–283 (CFAA…GILL).

Belongs to the UbiA prenyltransferase family. Requires Mg(2+) as cofactor.

It is found in the cell inner membrane. The catalysed reaction is all-trans-octaprenyl diphosphate + 4-hydroxybenzoate = 4-hydroxy-3-(all-trans-octaprenyl)benzoate + diphosphate. Its pathway is cofactor biosynthesis; ubiquinone biosynthesis. Catalyzes the prenylation of para-hydroxybenzoate (PHB) with an all-trans polyprenyl group. Mediates the second step in the final reaction sequence of ubiquinone-8 (UQ-8) biosynthesis, which is the condensation of the polyisoprenoid side chain with PHB, generating the first membrane-bound Q intermediate 3-octaprenyl-4-hydroxybenzoate. The chain is 4-hydroxybenzoate octaprenyltransferase from Coxiella burnetii (strain RSA 331 / Henzerling II).